We begin with the raw amino-acid sequence, 426 residues long: DNA primase DnaG (426 aa).

The region spanning 165–241 (DEIIIVEGRA…DIDYVAKAPP (77 aa)) is the Toprim domain. Residues Glu-171, Asp-215, and Asp-217 each coordinate Mg(2+). Positions 278 to 298 (PAVEERPQPPQPQPPAVQPVQ) are disordered. The segment covering 285-294 (QPPQPQPPAV) has biased composition (pro residues).

Belongs to the archaeal DnaG primase family. In terms of assembly, forms a ternary complex with MCM helicase and DNA. Component of the archaeal exosome complex. It depends on Mg(2+) as a cofactor.

The catalysed reaction is ssDNA + n NTP = ssDNA/pppN(pN)n-1 hybrid + (n-1) diphosphate.. Functionally, RNA polymerase that catalyzes the synthesis of short RNA molecules used as primers for DNA polymerase during DNA replication. Also part of the exosome, which is a complex involved in RNA degradation. Acts as a poly(A)-binding protein that enhances the interaction between heteromeric, adenine-rich transcripts and the exosome. This chain is DNA primase DnaG, found in Hyperthermus butylicus (strain DSM 5456 / JCM 9403 / PLM1-5).